The following is a 411-amino-acid chain: Trigger factor (411 aa).

Residues 162–240 (EDLVVIDYTT…IKEVKRRQNI (79 aa)) form the PPIase FKBP-type domain.

Belongs to the FKBP-type PPIase family. Tig subfamily.

It localises to the cytoplasm. The catalysed reaction is [protein]-peptidylproline (omega=180) = [protein]-peptidylproline (omega=0). In terms of biological role, involved in protein export. Acts as a chaperone by maintaining the newly synthesized protein in an open conformation. Functions as a peptidyl-prolyl cis-trans isomerase. The protein is Trigger factor of Thermodesulfovibrio yellowstonii (strain ATCC 51303 / DSM 11347 / YP87).